The following is an 88-amino-acid chain: Small ribosomal subunit protein bS20 (88 aa).

Belongs to the bacterial ribosomal protein bS20 family.

In terms of biological role, binds directly to 16S ribosomal RNA. The protein is Small ribosomal subunit protein bS20 of Mycoplasmopsis synoviae (strain 53) (Mycoplasma synoviae).